Consider the following 213-residue polypeptide: tRNA (guanine-N(7)-)-methyltransferase (213 aa).

S-adenosyl-L-methionine is bound by residues glutamate 44, glutamate 69, asparagine 96, and aspartate 118. Aspartate 118 is a catalytic residue. Lysine 122 serves as a coordination point for substrate. The tract at residues 124 to 129 is interaction with RNA; it reads RHEKRR. Residues aspartate 154 and 191-194 contribute to the substrate site; that span reads TEYE.

This sequence belongs to the class I-like SAM-binding methyltransferase superfamily. TrmB family.

The catalysed reaction is guanosine(46) in tRNA + S-adenosyl-L-methionine = N(7)-methylguanosine(46) in tRNA + S-adenosyl-L-homocysteine. The protein operates within tRNA modification; N(7)-methylguanine-tRNA biosynthesis. In terms of biological role, catalyzes the formation of N(7)-methylguanine at position 46 (m7G46) in tRNA. This Bacillus licheniformis (strain ATCC 14580 / DSM 13 / JCM 2505 / CCUG 7422 / NBRC 12200 / NCIMB 9375 / NCTC 10341 / NRRL NRS-1264 / Gibson 46) protein is tRNA (guanine-N(7)-)-methyltransferase.